The chain runs to 313 residues: Ribosomal RNA small subunit methyltransferase H (313 aa).

S-adenosyl-L-methionine-binding positions include 35–37, Asp55, Phe80, Asp102, and Gln109; that span reads GGH.

Belongs to the methyltransferase superfamily. RsmH family.

It localises to the cytoplasm. The enzyme catalyses cytidine(1402) in 16S rRNA + S-adenosyl-L-methionine = N(4)-methylcytidine(1402) in 16S rRNA + S-adenosyl-L-homocysteine + H(+). Specifically methylates the N4 position of cytidine in position 1402 (C1402) of 16S rRNA. The polypeptide is Ribosomal RNA small subunit methyltransferase H (Shewanella putrefaciens (strain CN-32 / ATCC BAA-453)).